The sequence spans 156 residues: Small ribosomal subunit protein uS7 (156 aa).

The protein belongs to the universal ribosomal protein uS7 family. As to quaternary structure, part of the 30S ribosomal subunit. Contacts proteins S9 and S11.

In terms of biological role, one of the primary rRNA binding proteins, it binds directly to 16S rRNA where it nucleates assembly of the head domain of the 30S subunit. Is located at the subunit interface close to the decoding center, probably blocks exit of the E-site tRNA. The protein is Small ribosomal subunit protein uS7 of Streptococcus thermophilus (strain CNRZ 1066).